The following is a 119-amino-acid chain: Beta-2-microglobulin (119 aa).

Positions 1–20 (MARFVVVALLVLLSLSGLEA) are cleaved as a signal peptide. One can recognise an Ig-like C1-type domain in the interval 25–114 (PKIQVYSRHP…VTLSTPKTVK (90 aa)). Cysteines 45 and 100 form a disulfide.

This sequence belongs to the beta-2-microglobulin family. Heterodimer of an alpha chain and a beta chain. Beta-2-microglobulin is the beta-chain of major histocompatibility complex class I molecules.

The protein resides in the secreted. Functionally, component of the class I major histocompatibility complex (MHC). Involved in the presentation of peptide antigens to the immune system. The sequence is that of Beta-2-microglobulin (B2M) from Aotus lemurinus (Gray-bellied night monkey).